The chain runs to 842 residues: Outer membrane usher protein AggC (842 aa).

Positions 1–21 (MKTSSFIIVILLCFRIENVIA) are cleaved as a signal peptide. Residues Cys819 and Cys841 are joined by a disulfide bond.

Belongs to the fimbrial export usher family.

It is found in the cell outer membrane. Functionally, involved in the export and assembly of the AAF/I fimbriae subunits across the outer membrane. The protein is Outer membrane usher protein AggC (aggC) of Escherichia coli.